A 505-amino-acid chain; its full sequence is Monocarboxylate transporter 6 (505 aa).

The Cytoplasmic portion of the chain corresponds to 1–17 (MPQALERADGSWAWVVL). A helical transmembrane segment spans residues 18–38 (LATMVTQGLTLGFPTCIGIFF). Over 39 to 53 (TELQWEFQASNSETS) the chain is Extracellular. Residues 54 to 74 (WFPSILTAVLHMAGPLCSILV) traverse the membrane as a helical segment. Residues 75-80 (GRFGCR) lie on the Cytoplasmic side of the membrane. Residues 81–101 (VTVMLGGVLASLGMVASSFSH) form a helical membrane-spanning segment. Topologically, residues 102 to 110 (NLSQLYFTA) are extracellular. The chain crosses the membrane as a helical span at residues 111-131 (GFITGLGMCFSFQSSITVLGF). The Cytoplasmic segment spans residues 132–137 (YFVRRR). The helical transmembrane segment at 138–158 (VLANALASMGVSLGITLWPLL) threads the bilayer. At 159-171 (SRYLLENLGWRGT) the chain is on the extracellular side. The chain crosses the membrane as a helical span at residues 172–192 (FLVFGGIFLHCCICGAIIRPV). Residues 193–239 (ATSVAPETKECPPPPPETPALGCLAACGRTIQRHLAFDILRHNTGYC) lie on the Cytoplasmic side of the membrane. A helical membrane pass occupies residues 240 to 260 (VYILGVMWSVLGFPLPQVFLV). Topologically, residues 261 to 274 (PYAMWHSVDEQQAA) are extracellular. Residues 275–295 (LLISIIGFSNIFLRPLAGLMA) traverse the membrane as a helical segment. Over 296-305 (GRPAFASHRK) the chain is Cytoplasmic. Residues 306 to 326 (YLFSLALLLNGLTNLVCAASG) form a helical membrane-spanning segment. At 327–329 (DFW) the chain is on the extracellular side. Residues 330-350 (VLVGYCLAYSVSMSGIGALIF) form a helical membrane-spanning segment. Topologically, residues 351-367 (QVLMDIVPMDQFPRALG) are cytoplasmic. A helical membrane pass occupies residues 368 to 388 (LFTVLDGLAFLISPPLAGLLL). At 389–396 (DATNNFSY) the chain is on the extracellular side. A helical membrane pass occupies residues 397 to 417 (VFYMSSFFLISAALFMGGSFY). Over 418 to 505 (ALQKKEQGKQ…QTALGWNSPT (88 aa)) the chain is Cytoplasmic. The segment at 443–464 (KDGPGKQRSPEIMCQSSRQPRP) is disordered.

Belongs to the major facilitator superfamily. Monocarboxylate porter (TC 2.A.1.13) family. Highly expressed in kidney.

It localises to the cell membrane. Functionally, proton-linked monocarboxylate transporter. Catalyzes the rapid transport across the plasma membrane of many monocarboxylates such as lactate, pyruvate, branched-chain oxo acids derived from leucine, valine and isoleucine, and the ketone bodies acetoacetate, beta-hydroxybutyrate and acetate. This Homo sapiens (Human) protein is Monocarboxylate transporter 6 (SLC16A5).